Consider the following 66-residue polypeptide: Large ribosomal subunit protein bL31 (66 aa).

Zn(2+) contacts are provided by C16, C18, C36, and C39.

Belongs to the bacterial ribosomal protein bL31 family. Type A subfamily. In terms of assembly, part of the 50S ribosomal subunit. Requires Zn(2+) as cofactor.

Its function is as follows. Binds the 23S rRNA. The sequence is that of Large ribosomal subunit protein bL31 from Clostridioides difficile (strain 630) (Peptoclostridium difficile).